The chain runs to 468 residues: MPCSVEDKTGLCGSRYSVMIPELQESVIFSEDSRHYNEKQTRRQRKSSADIISTVEFNNTGELLATGDKGGRVVIFQREQENKNQPHRRGEYNVYSTFQSHEPEFDYLKSLEIEEKINKIRWLPQQNAAYFLLSTNDKTVKLWKVSERDKRPEGYNLKDEEGRIRDPCTITSLRVPVLRPMDLMVEATPRRVFSNAHTYHINSISVNSDYETYMSADDLRINLWNLEITNRSFNIVDIKPTNMEELTEVITAAEFHPHNCNTFVYSSSKGTIRLCDMRSSALCDKHSKLFEEPEDPSNRSFFSEIISSISDVKFNHSGRYIMTRDYLTVKVWDLNMENRPIETYQVHDYLRSKLCSLYENDCIFDKFECVWNGSDSVIMTGSYNNFFRMFDRNTKRDVTLEASRENSKPRAILKPRKVCVGGKRRKDEISVDSLDFSKKILHTAWHPSENIIAVAATNNLYIFQDKVN.

7 WD repeats span residues 47–86, 112–153, 196–234, 245–285, 304–342, 359–400, and 435–468; these read SSADIISTVEFNNTGELLATGDKGGRVVIFQREQENKNQP, EIEE…KRPE, AHTYHINSISVNSDYETYMSADDLRINLWNLEITNRSFN, ELTE…LCDK, EIISSISDVKFNHSGRYIMTRDYLTVKVWDLNMENRPIE, ENDC…DVTL, and DFSKKILHTAWHPSENIIAVAATNNLYIFQDKVN.

The protein belongs to the phosphatase 2A regulatory subunit B family. PP2A consists of a common heterodimeric core enzyme, composed of a 36 kDa catalytic subunit (subunit C) and a 65 kDa constant regulatory subunit (PR65 or subunit A), that associates with a variety of regulatory subunits.

It is found in the cytoplasm. It localises to the cytoskeleton. Its subcellular location is the membrane. Its function is as follows. The B regulatory subunit might modulate substrate selectivity and catalytic activity, and might also direct the localization of the catalytic enzyme to a particular subcellular compartment. Negatively controls the initiation of oocyte maturation. This chain is Serine/threonine-protein phosphatase 2A 55 kDa regulatory subunit B beta isoform (ppp2r2b), found in Xenopus laevis (African clawed frog).